A 556-amino-acid chain; its full sequence is Olefin beta-lactone synthetase (556 aa).

ATP contacts are provided by residues 187–195 (TSGSTGVPK), 321–326 (TPYGAT), aspartate 430, and arginine 445.

This sequence belongs to the ATP-dependent AMP-binding enzyme family. In terms of assembly, monomer. Forms a complex with OleB and OleD.

The protein localises to the cytoplasm. It carries out the reaction a (2R,3S)-2-alkyl-3-hydroxyalkanoate + ATP = a cis-3-alkyl-4-alkyloxetan-2-one + AMP + diphosphate. In terms of biological role, involved in olefin biosynthesis. Catalyzes the conversion of 2-alkyl-3-hydroxyalkanoic acids to beta-lactones in the presence of ATP. In Xanthomonas campestris pv. campestris (strain ATCC 33913 / DSM 3586 / NCPPB 528 / LMG 568 / P 25), this protein is Olefin beta-lactone synthetase.